The chain runs to 501 residues: Glycerol kinase (501 aa).

Threonine 16 contributes to the ADP binding site. ATP-binding residues include threonine 16, threonine 17, and serine 18. Threonine 16 serves as a coordination point for sn-glycerol 3-phosphate. Arginine 20 serves as a coordination point for ADP. Residues arginine 84, glutamate 85, tyrosine 135, and aspartate 242 each contribute to the sn-glycerol 3-phosphate site. Glycerol-binding residues include arginine 84, glutamate 85, tyrosine 135, aspartate 242, and glutamine 243. ADP contacts are provided by threonine 264 and glycine 307. ATP is bound by residues threonine 264, glycine 307, glutamine 311, and glycine 408. Glycine 408 provides a ligand contact to ADP.

Belongs to the FGGY kinase family.

The enzyme catalyses glycerol + ATP = sn-glycerol 3-phosphate + ADP + H(+). Its pathway is polyol metabolism; glycerol degradation via glycerol kinase pathway; sn-glycerol 3-phosphate from glycerol: step 1/1. Functionally, key enzyme in the regulation of glycerol uptake and metabolism. Catalyzes the phosphorylation of glycerol to yield sn-glycerol 3-phosphate. This Saccharolobus islandicus (strain M.14.25 / Kamchatka #1) (Sulfolobus islandicus) protein is Glycerol kinase.